The following is a 398-amino-acid chain: MSHKLVLVLNCGSSSLKFAVIDALTGDDQISGLAECFGLEDSRIKWKVNGQKSEASLGAFTAHREAVEYIVNDILGAHPEIAAEIQAIGHRVVHGGEKFTRSVIIDESVIHGIEDCATLAPLHNPAHLIGIRAAQASFPALPQVAVFDTAFHQTMPEKAYIYALPYKLYRENAIRRYGMHGTSHLFISREAAAALGKDEADTNIICAHLGNGASVTAIKGGKSVDTSMGLTPLEGLVMGTRCGDLDPSVIFHLVNRLGYTLDEVESVLNKQSGLLGISELTNDCRGIEEGFGSGHKGATLALEIFCYRLAKYIASYTVPLERLDAVVFTGGIGENSDLIREKVLNSLAIFNFNVDKERNAAARFGNGGQITTDEGTVAMVIPTNEEWVIAQDAIELIK.

Residue N10 participates in Mg(2+) binding. K17 is a binding site for ATP. R91 provides a ligand contact to substrate. The Proton donor/acceptor role is filled by D148. Residues 208 to 212 (HLGNG), 283 to 285 (DCR), and 331 to 335 (GIGEN) each bind ATP. Residue E385 coordinates Mg(2+).

This sequence belongs to the acetokinase family. In terms of assembly, homodimer. Mg(2+) serves as cofactor. Requires Mn(2+) as cofactor.

The protein resides in the cytoplasm. The enzyme catalyses acetate + ATP = acetyl phosphate + ADP. It participates in metabolic intermediate biosynthesis; acetyl-CoA biosynthesis; acetyl-CoA from acetate: step 1/2. Its function is as follows. Catalyzes the formation of acetyl phosphate from acetate and ATP. Can also catalyze the reverse reaction. This chain is Acetate kinase, found in Shewanella pealeana (strain ATCC 700345 / ANG-SQ1).